We begin with the raw amino-acid sequence, 207 residues long: Venom allergen 5 (207 aa).

4 disulfide bridges follow: cysteine 4-cysteine 16, cysteine 8-cysteine 105, cysteine 29-cysteine 97, and cysteine 173-cysteine 190. The SCP domain occupies 48-192 (VDEHNRFRQK…MKSHYLVCNY (145 aa)).

The protein belongs to the CRISP family. Venom allergen 5-like subfamily. As to quaternary structure, monomer. In terms of tissue distribution, expressed by the venom gland.

The protein resides in the secreted. The protein is Venom allergen 5 of Polybia scutellaris rioplatensis (Camoati).